Here is a 183-residue protein sequence, read N- to C-terminus: NAD(P)H-quinone oxidoreductase subunit I, chloroplastic (183 aa).

4Fe-4S ferredoxin-type domains are found at residues 55–84 (GRIH…VDWE) and 95–124 (KNYS…MTEE). Positions 64, 67, 70, 74, 104, 107, 110, and 114 each coordinate [4Fe-4S] cluster.

Belongs to the complex I 23 kDa subunit family. In terms of assembly, NDH is composed of at least 16 different subunits, 5 of which are encoded in the nucleus. The cofactor is [4Fe-4S] cluster.

The protein resides in the plastid. It is found in the chloroplast thylakoid membrane. It catalyses the reaction a plastoquinone + NADH + (n+1) H(+)(in) = a plastoquinol + NAD(+) + n H(+)(out). The catalysed reaction is a plastoquinone + NADPH + (n+1) H(+)(in) = a plastoquinol + NADP(+) + n H(+)(out). In terms of biological role, NDH shuttles electrons from NAD(P)H:plastoquinone, via FMN and iron-sulfur (Fe-S) centers, to quinones in the photosynthetic chain and possibly in a chloroplast respiratory chain. The immediate electron acceptor for the enzyme in this species is believed to be plastoquinone. Couples the redox reaction to proton translocation, and thus conserves the redox energy in a proton gradient. The sequence is that of NAD(P)H-quinone oxidoreductase subunit I, chloroplastic from Marchantia polymorpha (Common liverwort).